We begin with the raw amino-acid sequence, 35 residues long: Conotoxin M11.2 (35 aa).

Intrachain disulfides connect C2–C16, C9–C21, C15–C26, and C20–C33.

Belongs to the conotoxin I1 superfamily. In terms of tissue distribution, expressed by the venom duct.

It localises to the secreted. The polypeptide is Conotoxin M11.2 (Conus magus (Magical cone)).